The primary structure comprises 495 residues: Maternal protein exuperantia-1 (495 aa).

Disordered stretches follow at residues 197 to 217 (DESA…SSND) and 377 to 495 (TIKP…AATN). 2 stretches are compositionally biased toward polar residues: residues 207–216 (ENVNRNGSSN) and 398–414 (AASS…TSTE).

Its function is as follows. Ensures the proper localization of the mRNA of the bicoid gene to the anterior regions of the oocyte thus playing a fundamental role in the establishment of the polarity of the oocyte. May bind the bcd mRNA. In Drosophila pseudoobscura pseudoobscura (Fruit fly), this protein is Maternal protein exuperantia-1 (exu1).